Here is a 714-residue protein sequence, read N- to C-terminus: Glutamine-dependent NAD(+) synthetase (714 aa).

The region spanning 5–275 (ITLATCNLNQ…VEVVTATVDL (271 aa)) is the CN hydrolase domain. E45 functions as the Proton acceptor; for glutaminase activity in the catalytic mechanism. The active-site For glutaminase activity is the K114. The active-site Nucleophile; for glutaminase activity is C175. The ligase stretch occupies residues 329 to 714 (YHSPEEEIAL…GSTLDIMSID (386 aa)). An ATP-binding site is contributed by 359 to 366 (PLSGGIDS). S361 is an active-site residue.

It in the C-terminal section; belongs to the NAD synthetase family.

It catalyses the reaction deamido-NAD(+) + L-glutamine + ATP + H2O = L-glutamate + AMP + diphosphate + NAD(+) + H(+). The protein operates within cofactor biosynthesis; NAD(+) biosynthesis; NAD(+) from deamido-NAD(+) (L-Gln route): step 1/1. In Saccharomyces cerevisiae (strain ATCC 204508 / S288c) (Baker's yeast), this protein is Glutamine-dependent NAD(+) synthetase (QNS1).